An 86-amino-acid chain; its full sequence is Small ribosomal subunit protein uS15c (86 aa).

The protein belongs to the universal ribosomal protein uS15 family. Part of the 30S ribosomal subunit.

Its subcellular location is the plastid. The protein localises to the chloroplast. The sequence is that of Small ribosomal subunit protein uS15c (rps15) from Cryptomeria japonica (Japanese cedar).